Reading from the N-terminus, the 582-residue chain is Putative transcriptional regulator HVO_1357 (582 aa).

Residues 19–129 (VVLVVDDDED…EVKETVEELL (111 aa)) form the Response regulatory domain. Residue D67 is modified to 4-aspartylphosphate. A coiled-coil region spans residues 165–203 (LSDLRSRLEAVRAEHEAAIRNREAQLDRLNRTNELLRDV). Positions 517–569 (LTDRQRTVLETSLVSGYFEWPRGSTAEEVADSLGISPPTLHEHLRTAERKLIE) constitute an HTH bat-type domain.

Its function is as follows. May be part of a signal-dependent gene regulation cascade that is relevant to swimming motility. May be involved in the transcription regulation of target genes. The sequence is that of Putative transcriptional regulator HVO_1357 from Haloferax volcanii (strain ATCC 29605 / DSM 3757 / JCM 8879 / NBRC 14742 / NCIMB 2012 / VKM B-1768 / DS2) (Halobacterium volcanii).